We begin with the raw amino-acid sequence, 478 residues long: 3-isopropylmalate dehydratase large subunit (478 aa).

3 residues coordinate [4Fe-4S] cluster: Cys347, Cys407, and Cys410.

Belongs to the aconitase/IPM isomerase family. LeuC type 1 subfamily. As to quaternary structure, heterodimer of LeuC and LeuD. Requires [4Fe-4S] cluster as cofactor.

The catalysed reaction is (2R,3S)-3-isopropylmalate = (2S)-2-isopropylmalate. Its pathway is amino-acid biosynthesis; L-leucine biosynthesis; L-leucine from 3-methyl-2-oxobutanoate: step 2/4. In terms of biological role, catalyzes the isomerization between 2-isopropylmalate and 3-isopropylmalate, via the formation of 2-isopropylmaleate. In Prochlorococcus marinus (strain MIT 9313), this protein is 3-isopropylmalate dehydratase large subunit.